The chain runs to 615 residues: DNA mismatch repair protein MutL (615 aa).

The interval 363–397 (FAEPAAREPVAPRYTPAPASGSRPAAPWPNAQPGY) is disordered. A compositionally biased stretch (low complexity) spans 364 to 391 (AEPAAREPVAPRYTPAPASGSRPAAPWP).

Belongs to the DNA mismatch repair MutL/HexB family.

In terms of biological role, this protein is involved in the repair of mismatches in DNA. It is required for dam-dependent methyl-directed DNA mismatch repair. May act as a 'molecular matchmaker', a protein that promotes the formation of a stable complex between two or more DNA-binding proteins in an ATP-dependent manner without itself being part of a final effector complex. This chain is DNA mismatch repair protein MutL, found in Shigella boydii serotype 4 (strain Sb227).